The primary structure comprises 398 residues: Maltoporin (398 aa).

Residues 1–30 (MTDKNNKRLFKVAPLATAIAASLFTVNASA) form the signal peptide.

It belongs to the porin LamB (TC 1.B.3) family. In terms of assembly, homotrimer formed of three 18-stranded antiparallel beta-barrels, containing three independent channels.

It is found in the cell outer membrane. The enzyme catalyses beta-maltose(in) = beta-maltose(out). Its function is as follows. Involved in the transport of maltose and maltodextrins. The sequence is that of Maltoporin from Hahella chejuensis (strain KCTC 2396).